A 120-amino-acid polypeptide reads, in one-letter code: uncharacterized protein (120 aa).

The signal sequence occupies residues 1-16 (MFKFILLCFCINFAFS).

This is an uncharacterized protein from Acheta domesticus (House cricket).